A 57-amino-acid chain; its full sequence is uncharacterized protein (57 aa).

Transmembrane regions (helical) follow at residues 4-26 and 33-55; these read VNILSYFAFSVEAVLFPMSSELW and ALGYGVEKICLYSFVLVLPIAIL.

It is found in the cell membrane. This is an uncharacterized protein from Methanocaldococcus jannaschii (strain ATCC 43067 / DSM 2661 / JAL-1 / JCM 10045 / NBRC 100440) (Methanococcus jannaschii).